Consider the following 198-residue polypeptide: Elongation factor Ts (198 aa).

The segment at 81 to 84 is involved in Mg(2+) ion dislocation from EF-Tu; that stretch reads TDFV.

The protein belongs to the EF-Ts family.

Its subcellular location is the cytoplasm. Its function is as follows. Associates with the EF-Tu.GDP complex and induces the exchange of GDP to GTP. It remains bound to the aminoacyl-tRNA.EF-Tu.GTP complex up to the GTP hydrolysis stage on the ribosome. This is Elongation factor Ts from Leptospira biflexa serovar Patoc (strain Patoc 1 / Ames).